Here is a 417-residue protein sequence, read N- to C-terminus: UDP-N-acetylglucosamine 1-carboxyvinyltransferase 2 (417 aa).

22–23 (KN) is a binding site for phosphoenolpyruvate. Arginine 92 serves as a coordination point for UDP-N-acetyl-alpha-D-glucosamine. The Proton donor role is filled by cysteine 116. Cysteine 116 is subject to 2-(S-cysteinyl)pyruvic acid O-phosphothioketal. UDP-N-acetyl-alpha-D-glucosamine contacts are provided by residues 121-125 (RPIDL), aspartate 305, and isoleucine 327.

This sequence belongs to the EPSP synthase family. MurA subfamily.

Its subcellular location is the cytoplasm. It catalyses the reaction phosphoenolpyruvate + UDP-N-acetyl-alpha-D-glucosamine = UDP-N-acetyl-3-O-(1-carboxyvinyl)-alpha-D-glucosamine + phosphate. It participates in cell wall biogenesis; peptidoglycan biosynthesis. Functionally, cell wall formation. Adds enolpyruvyl to UDP-N-acetylglucosamine. The sequence is that of UDP-N-acetylglucosamine 1-carboxyvinyltransferase 2 from Caldanaerobacter subterraneus subsp. tengcongensis (strain DSM 15242 / JCM 11007 / NBRC 100824 / MB4) (Thermoanaerobacter tengcongensis).